The following is a 139-amino-acid chain: Two-component response regulator 24 (139 aa).

The Response regulatory domain maps to 19 to 134 (TALVVDDSFV…KLLSILHKLN (116 aa)). D69 carries the 4-aspartylphosphate modification.

It belongs to the ARR family. Type-A subfamily. Post-translationally, two-component system major event consists of a His-to-Asp phosphorelay between a sensor histidine kinase (HK) and a response regulator (RR). In plants, the His-to-Asp phosphorelay involves an additional intermediate named Histidine-containing phosphotransfer protein (HPt). This multistep phosphorelay consists of a His-Asp-His-Asp sequential transfer of a phosphate group between first a His and an Asp of the HK protein, followed by the transfer to a conserved His of the HPt protein and finally the transfer to an Asp in the receiver domain of the RR protein. As to expression, mostly expressed in flowers and siliques, primarily restricted to pollen grains.

The protein localises to the nucleus. Functionally, functions as a response regulator involved in His-to-Asp phosphorelay signal transduction system. Phosphorylation of the Asp residue in the receiver domain activates the ability of the protein to promote the transcription of target genes. Type-A response regulators seem to act as negative regulators of the cytokinin signaling. The polypeptide is Two-component response regulator 24 (Arabidopsis thaliana (Mouse-ear cress)).